Consider the following 411-residue polypeptide: Serine hydroxymethyltransferase (411 aa).

(6S)-5,6,7,8-tetrahydrofolate-binding positions include Leu113 and 117–119 (GHL). At Lys222 the chain carries N6-(pyridoxal phosphate)lysine. A (6S)-5,6,7,8-tetrahydrofolate-binding site is contributed by 346 to 348 (SPF).

Belongs to the SHMT family. Homodimer. It depends on pyridoxal 5'-phosphate as a cofactor.

It localises to the cytoplasm. The enzyme catalyses (6R)-5,10-methylene-5,6,7,8-tetrahydrofolate + glycine + H2O = (6S)-5,6,7,8-tetrahydrofolate + L-serine. The protein operates within one-carbon metabolism; tetrahydrofolate interconversion. It participates in amino-acid biosynthesis; glycine biosynthesis; glycine from L-serine: step 1/1. Its function is as follows. Catalyzes the reversible interconversion of serine and glycine with tetrahydrofolate (THF) serving as the one-carbon carrier. This reaction serves as the major source of one-carbon groups required for the biosynthesis of purines, thymidylate, methionine, and other important biomolecules. Also exhibits THF-independent aldolase activity toward beta-hydroxyamino acids, producing glycine and aldehydes, via a retro-aldol mechanism. This is Serine hydroxymethyltransferase from Prochlorococcus marinus (strain NATL2A).